Reading from the N-terminus, the 278-residue chain is Large ribosomal subunit protein uL24m (278 aa).

Residues 109 to 142 enclose the KOW domain; the sequence is FFPGDLVQVMVGKDKGRQGLVLTISRDSSEVVVD.

The protein belongs to the universal ribosomal protein uL24 family.

It is found in the mitochondrion. This is Large ribosomal subunit protein uL24m (mrpl-24) from Caenorhabditis briggsae.